A 323-amino-acid polypeptide reads, in one-letter code: Elongation factor P--(R)-beta-lysine ligase (323 aa).

Substrate is bound at residue 74-76; that stretch reads SPE. Residues 98–100 and asparagine 107 each bind ATP; that span reads RNE. Tyrosine 116 is a substrate binding site. An ATP-binding site is contributed by 242–243; it reads EL. Glutamate 249 lines the substrate pocket. Glycine 298 is an ATP binding site.

Belongs to the class-II aminoacyl-tRNA synthetase family. EpmA subfamily. In terms of assembly, homodimer.

The catalysed reaction is D-beta-lysine + L-lysyl-[protein] + ATP = N(6)-((3R)-3,6-diaminohexanoyl)-L-lysyl-[protein] + AMP + diphosphate + H(+). Its function is as follows. With EpmB is involved in the beta-lysylation step of the post-translational modification of translation elongation factor P (EF-P). Catalyzes the ATP-dependent activation of (R)-beta-lysine produced by EpmB, forming a lysyl-adenylate, from which the beta-lysyl moiety is then transferred to the epsilon-amino group of a conserved specific lysine residue in EF-P. This is Elongation factor P--(R)-beta-lysine ligase from Vibrio atlanticus (strain LGP32) (Vibrio splendidus (strain Mel32)).